The primary structure comprises 198 residues: Uracil phosphoribosyltransferase homolog (198 aa).

It belongs to the UPRTase family.

The protein resides in the plastid. The protein localises to the chloroplast. In Porphyra purpurea (Red seaweed), this protein is Uracil phosphoribosyltransferase homolog.